The sequence spans 473 residues: Bifunctional protein HldE (473 aa).

Residues 1-318 (MKLSMPRFDQ…RAVQREEGSE (318 aa)) are ribokinase. 194–197 (NLGE) is a binding site for ATP. The active site involves D263. Residues 343–473 (FTNGCFDILH…TAIVEKIRKA (131 aa)) are cytidylyltransferase.

This sequence in the N-terminal section; belongs to the carbohydrate kinase PfkB family. It in the C-terminal section; belongs to the cytidylyltransferase family. Homodimer.

The catalysed reaction is D-glycero-beta-D-manno-heptose 7-phosphate + ATP = D-glycero-beta-D-manno-heptose 1,7-bisphosphate + ADP + H(+). The enzyme catalyses D-glycero-beta-D-manno-heptose 1-phosphate + ATP + H(+) = ADP-D-glycero-beta-D-manno-heptose + diphosphate. Its pathway is nucleotide-sugar biosynthesis; ADP-L-glycero-beta-D-manno-heptose biosynthesis; ADP-L-glycero-beta-D-manno-heptose from D-glycero-beta-D-manno-heptose 7-phosphate: step 1/4. The protein operates within nucleotide-sugar biosynthesis; ADP-L-glycero-beta-D-manno-heptose biosynthesis; ADP-L-glycero-beta-D-manno-heptose from D-glycero-beta-D-manno-heptose 7-phosphate: step 3/4. In terms of biological role, catalyzes the phosphorylation of D-glycero-D-manno-heptose 7-phosphate at the C-1 position to selectively form D-glycero-beta-D-manno-heptose-1,7-bisphosphate. Its function is as follows. Catalyzes the ADP transfer from ATP to D-glycero-beta-D-manno-heptose 1-phosphate, yielding ADP-D-glycero-beta-D-manno-heptose. This chain is Bifunctional protein HldE, found in Stutzerimonas stutzeri (strain A1501) (Pseudomonas stutzeri).